A 255-amino-acid chain; its full sequence is 14-3-3-like protein B (255 aa).

Belongs to the 14-3-3 family.

This Nicotiana tabacum (Common tobacco) protein is 14-3-3-like protein B.